A 337-amino-acid chain; its full sequence is Glyceraldehyde-3-phosphate dehydrogenase (337 aa).

NAD(+)-binding positions include 17-18 (RI), D39, K83, and S125. Residues 156–158 (SCT), T187, R202, 215–216 (TG), and R238 each bind D-glyceraldehyde 3-phosphate. Residue C157 is the Nucleophile of the active site. An NAD(+)-binding site is contributed by N319.

This sequence belongs to the glyceraldehyde-3-phosphate dehydrogenase family. Homotetramer.

Its subcellular location is the cytoplasm. It carries out the reaction D-glyceraldehyde 3-phosphate + phosphate + NAD(+) = (2R)-3-phospho-glyceroyl phosphate + NADH + H(+). It participates in carbohydrate degradation; glycolysis; pyruvate from D-glyceraldehyde 3-phosphate: step 1/5. Its function is as follows. Catalyzes the oxidative phosphorylation of glyceraldehyde 3-phosphate (G3P) to 1,3-bisphosphoglycerate (BPG) using the cofactor NAD. The first reaction step involves the formation of a hemiacetal intermediate between G3P and a cysteine residue, and this hemiacetal intermediate is then oxidized to a thioester, with concomitant reduction of NAD to NADH. The reduced NADH is then exchanged with the second NAD, and the thioester is attacked by a nucleophilic inorganic phosphate to produce BPG. This is Glyceraldehyde-3-phosphate dehydrogenase (gapA) from Mycoplasma genitalium (strain ATCC 33530 / DSM 19775 / NCTC 10195 / G37) (Mycoplasmoides genitalium).